The primary structure comprises 428 residues: Elongation factor 1-alpha (428 aa).

The tr-type G domain occupies 5-225 (KPVLNVAFIG…DKFQPPEKPT (221 aa)). The G1 stretch occupies residues 14–21 (GHVDAGKS). 14-21 (GHVDAGKS) lines the GTP pocket. Residue S21 participates in Mg(2+) binding. The G2 stretch occupies residues 70–74 (GVTID). Residues 91–94 (DCPG) are G3. GTP contacts are provided by residues 91 to 95 (DCPGH) and 149 to 152 (NKMD). Positions 149-152 (NKMD) are G4. The interval 189 to 191 (ASL) is G5.

Belongs to the TRAFAC class translation factor GTPase superfamily. Classic translation factor GTPase family. EF-Tu/EF-1A subfamily.

It localises to the cytoplasm. The catalysed reaction is GTP + H2O = GDP + phosphate + H(+). In terms of biological role, GTP hydrolase that promotes the GTP-dependent binding of aminoacyl-tRNA to the A-site of ribosomes during protein biosynthesis. The protein is Elongation factor 1-alpha of Methanocaldococcus jannaschii (strain ATCC 43067 / DSM 2661 / JAL-1 / JCM 10045 / NBRC 100440) (Methanococcus jannaschii).